The sequence spans 582 residues: DNA primase (582 aa).

Residues 40-64 (CPFHHEKTPSFTVSQKKQFYHCFGC) form a CHC2-type zinc finger. Residues 259 to 341 (EMLLVVEGYM…GRQLKFVFLP (83 aa)) enclose the Toprim domain. Glutamate 265, aspartate 309, and aspartate 311 together coordinate Mg(2+).

The protein belongs to the DnaG primase family. As to quaternary structure, monomer. Interacts with DnaB. Zn(2+) is required as a cofactor. Requires Mg(2+) as cofactor.

It catalyses the reaction ssDNA + n NTP = ssDNA/pppN(pN)n-1 hybrid + (n-1) diphosphate.. In terms of biological role, RNA polymerase that catalyzes the synthesis of short RNA molecules used as primers for DNA polymerase during DNA replication. This chain is DNA primase, found in Pasteurella multocida (strain Pm70).